Consider the following 323-residue polypeptide: tRNA-modifying protein YgfZ (323 aa).

Residues Trp29 and Trp182 each contribute to the folate site.

This sequence belongs to the tRNA-modifying YgfZ family.

The protein resides in the cytoplasm. Functionally, folate-binding protein involved in regulating the level of ATP-DnaA and in the modification of some tRNAs. It is probably a key factor in regulatory networks that act via tRNA modification, such as initiation of chromosomal replication. The protein is tRNA-modifying protein YgfZ of Vibrio atlanticus (strain LGP32) (Vibrio splendidus (strain Mel32)).